Here is a 287-residue protein sequence, read N- to C-terminus: uncharacterized protein (287 aa).

Disordered stretches follow at residues 109 to 175 (QEES…SSQD), 203 to 223 (IPPP…SQPV), and 257 to 287 (KESE…SSEE). Positions 110–136 (EESSSSLEEGIIEDPVVATPSPASAAP) are enriched in low complexity. The segment covering 143–152 (RKEFKNEKWK) has biased composition (basic and acidic residues). Residues 153 to 162 (EKKKQGRRRN) show a composition bias toward basic residues. Residues 273–287 (SLEEASVHDRISSEE) show a composition bias toward basic and acidic residues.

It belongs to the chlamydial CPn_0623/CT_504/TC_0791 family.

This is an uncharacterized protein from Chlamydia muridarum (strain MoPn / Nigg).